Reading from the N-terminus, the 426-residue chain is 26S proteasome regulatory subunit 7 homolog A (426 aa).

An ATP-binding site is contributed by 209–216 (GPPGTGKT). Glycyl lysine isopeptide (Lys-Gly) (interchain with G-Cter in ubiquitin) cross-links involve residues lysine 400 and lysine 415.

This sequence belongs to the AAA ATPase family. As to quaternary structure, component of the 19S regulatory particle (RP/PA700) base subcomplex of the 26S proteasome. The 26S proteasome is composed of a core protease (CP), known as the 20S proteasome, capped at one or both ends by the 19S regulatory particle (RP/PA700). The RP/PA700 complex is composed of at least 17 different subunits in two subcomplexes, the base and the lid, which form the portions proximal and distal to the 20S proteolytic core, respectively.

It localises to the cytoplasm. The protein resides in the nucleus. Functionally, the 26S proteasome is involved in the ATP-dependent degradation of ubiquitinated proteins. The regulatory (or ATPase) complex confers ATP dependency and substrate specificity to the 26S complex. In Arabidopsis thaliana (Mouse-ear cress), this protein is 26S proteasome regulatory subunit 7 homolog A (RPT1A).